A 310-amino-acid chain; its full sequence is MNILTDPTKLQGCTDTNANKCVEGDGEGSVQVQLDPDLKIGTAKVFSIYGKGGIGKSTTSSNLSVAFSKLGKRVLQIGCDPKHDSTFTLTKCLIPTVIDVLESVNFHAEELRPEDFVFEGYNGVMCLEAGGPPAGTGCGGYVVGQTVKLLKEHHLLEDTDVVIFDVLGDVVCGGFAAPLQHSDRAMIVTANDFDSIFAANRIVAAITAKAKNYGVRVGGIIANRSDATDQIDKFSERTGVPRVAHFPALDIIRKSRLKKSTLFELDHSPELAKVQEEYMRLATELWEGKQPPCEGKALKDREIFDLLGFD.

ATP-binding positions include 53–58 (GIGKST) and Lys82. Ser57 provides a ligand contact to Mg(2+). Cys138 and Cys172 together coordinate [4Fe-4S] cluster. ATP-binding positions include 223–224 (NR) and 247–249 (PAL).

This sequence belongs to the NifH/BchL/ChlL family. In terms of assembly, homodimer. Protochlorophyllide reductase is composed of three subunits; BchL, BchN and BchB. [4Fe-4S] cluster serves as cofactor.

The enzyme catalyses chlorophyllide a + oxidized 2[4Fe-4S]-[ferredoxin] + 2 ADP + 2 phosphate = protochlorophyllide a + reduced 2[4Fe-4S]-[ferredoxin] + 2 ATP + 2 H2O. It participates in porphyrin-containing compound metabolism; bacteriochlorophyll biosynthesis (light-independent). Functionally, component of the dark-operative protochlorophyllide reductase (DPOR) that uses Mg-ATP and reduced ferredoxin to reduce ring D of protochlorophyllide (Pchlide) to form chlorophyllide a (Chlide). This reaction is light-independent. The L component serves as a unique electron donor to the NB-component of the complex, and binds Mg-ATP. This chain is Light-independent protochlorophyllide reductase iron-sulfur ATP-binding protein, found in Rhodopseudomonas palustris (strain BisA53).